Consider the following 296-residue polypeptide: MFGAFVSHRLWSDSGCTTTCITNSIANYVAFGEQIGFPFKSAQVFIAGPRKAVINIQKDDKVELLKMIDKHNLWVVAHGTYLDVPWSRRSAFVTHFIQQELLICKEVGIKGLVLHLGAVEPELIVEGLKKIKPVEGVIIYLETPHNKHHTYKYSTIEQIKELFLRIRNTGLKQIGLCIDTAHIWSSGVNISSYNSARQWLRSLEDIHSVIPPSHIMFHLNDAATKCGSGVDRHASLFEGMIWKSYSHKIKHSGLYCFVEYITRHQCPAILERNLGSSMQLQTALTAEFNTLKSFLK.

Cysteines 16 and 20 form a disulfide. Residues histidine 78, histidine 115, glutamate 142, histidine 182, histidine 218, aspartate 231, histidine 233, and glutamate 271 each contribute to the Zn(2+) site.

The protein belongs to the AP endonuclease 2 family. The cofactor is Zn(2+).

It localises to the host nucleus. The protein localises to the host cytoplasm. It is found in the virion. Endonuclease that plays a role in DNA repair. Cleaves phosphodiester bonds on the 5' side of apurinic or apyrimidinic sites (AP sites). In addition to endonuclease activity, the ASFV enzyme has a proofreading 3'-5' exonuclease activity that is considerably more efficient in the elimination of a mismatch than in that of a correctly paired base. Displays 3'-phosphatase and 3'-repair diesterase activities. The single nucleotide gaps generated by the AP endonuclease are filled by the viral AP endonuclease and DNA ligase. This is Probable AP endonuclease from Ornithodoros (relapsing fever ticks).